A 254-amino-acid chain; its full sequence is uncharacterized protein (254 aa).

Cys71 (acyl-thioester intermediate) is an active-site residue. Residues His110 and Asp125 contribute to the active site.

Belongs to the arylamine N-acetyltransferase family.

This is an uncharacterized protein from Bacillus subtilis (strain 168).